A 400-amino-acid polypeptide reads, in one-letter code: Homoserine O-acetyltransferase (400 aa).

Residues 64 to 373 (NAILICHALT…TDRGHDAFLL (310 aa)) form the AB hydrolase-1 domain. Catalysis depends on Ser-169, which acts as the Nucleophile. Arg-239 contacts substrate. Active-site residues include Asp-335 and His-368. Residue Asp-369 coordinates substrate.

It belongs to the AB hydrolase superfamily. MetX family. As to quaternary structure, homodimer.

It is found in the cytoplasm. It catalyses the reaction L-homoserine + acetyl-CoA = O-acetyl-L-homoserine + CoA. Its pathway is amino-acid biosynthesis; L-methionine biosynthesis via de novo pathway; O-acetyl-L-homoserine from L-homoserine: step 1/1. Its function is as follows. Transfers an acetyl group from acetyl-CoA to L-homoserine, forming acetyl-L-homoserine. This chain is Homoserine O-acetyltransferase, found in Bradyrhizobium diazoefficiens (strain JCM 10833 / BCRC 13528 / IAM 13628 / NBRC 14792 / USDA 110).